The chain runs to 311 residues: Heme A synthase (311 aa).

The Cytoplasmic portion of the chain corresponds to 1 to 6 (MQRFIK). A helical transmembrane segment spans residues 7–27 (WLAVITSLDLLIVLLGGALVT). The Extracellular portion of the chain corresponds to 28-62 (KTGSGQGCGKSWPLCNGEFVPSNLSMETIIELSHR). A disulfide bridge links Cys-35 with Cys-42. Residue Glu-58 is part of the active site. His-61 is a heme o binding site. Residues 63-83 (LTSGSAGILVTLLCILSWKYY) form a helical membrane-spanning segment. The Cytoplasmic portion of the chain corresponds to 84–91 (KHVRETKT). Residues 92-112 (LAILSFVFLVAQALMGAAAVV) form a helical membrane-spanning segment. The Extracellular segment spans residues 113-121 (WGQMPAVLA). Residues 122–142 (IHFGISLISFASVILLTCLIF) form a helical membrane-spanning segment. His-123 provides a ligand contact to heme o. Residues 143 to 159 (EIDQKFDARSLIMDKKM) are Cytoplasmic-facing. Residues 160–180 (KFHIYGVTIYSYIVVYTGALV) form a helical membrane-spanning segment. At 181-211 (RHERASLACPDFPLCSKNRPMPTQLHEWVQM) the chain is on the extracellular side. Cys-189 and Cys-195 are oxidised to a cystine. A helical transmembrane segment spans residues 212 to 232 (GHRVAAMLIFAWILYAMILAI). Residue His-213 participates in heme b binding. The Cytoplasmic segment spans residues 233 to 243 (RHYKQQPVVYW). Residues 244-264 (GWIISFILVTLQAVVGVLVVF) form a helical membrane-spanning segment. Residues 265–271 (TNASLAM) lie on the Extracellular side of the membrane. Residues 272–292 (ALLHSLFISCLFAVLCYLVML) traverse the membrane as a helical segment. His-275 is a binding site for heme b. Residues 293–311 (GTRIKVNAKEAGSTSKQTK) are Cytoplasmic-facing.

Belongs to the COX15/CtaA family. Type 1 subfamily. As to quaternary structure, interacts with CtaB. It depends on heme b as a cofactor.

The protein localises to the cell membrane. The catalysed reaction is Fe(II)-heme o + 2 A + H2O = Fe(II)-heme a + 2 AH2. The protein operates within porphyrin-containing compound metabolism; heme A biosynthesis; heme A from heme O: step 1/1. Functionally, catalyzes the conversion of heme O to heme A by two successive hydroxylations of the methyl group at C8. The first hydroxylation forms heme I, the second hydroxylation results in an unstable dihydroxymethyl group, which spontaneously dehydrates, resulting in the formyl group of heme A. The polypeptide is Heme A synthase (Bacillus cereus (strain G9842)).